The sequence spans 365 residues: Putative F-box protein At1g31000 (365 aa).

Positions 15-62 constitute an F-box domain; the sequence is NDSDSVRIDIVIEIVKRLPLKDVSRFLLVSKLWSEIIRSPYFIRSFPF.

In Arabidopsis thaliana (Mouse-ear cress), this protein is Putative F-box protein At1g31000.